The primary structure comprises 178 residues: Ribosome maturation factor RimM (178 aa).

A PRC barrel domain is found at 101–178 (DGEYYWYQLQ…EMKVEWDADF (78 aa)).

Belongs to the RimM family. In terms of assembly, binds ribosomal protein uS19.

It is found in the cytoplasm. In terms of biological role, an accessory protein needed during the final step in the assembly of 30S ribosomal subunit, possibly for assembly of the head region. Essential for efficient processing of 16S rRNA. May be needed both before and after RbfA during the maturation of 16S rRNA. It has affinity for free ribosomal 30S subunits but not for 70S ribosomes. The protein is Ribosome maturation factor RimM of Pseudomonas fluorescens (strain ATCC BAA-477 / NRRL B-23932 / Pf-5).